We begin with the raw amino-acid sequence, 89 residues long: Small ribosomal subunit protein uS15 (89 aa).

Belongs to the universal ribosomal protein uS15 family. In terms of assembly, part of the 30S ribosomal subunit. Forms a bridge to the 50S subunit in the 70S ribosome, contacting the 23S rRNA.

Functionally, one of the primary rRNA binding proteins, it binds directly to 16S rRNA where it helps nucleate assembly of the platform of the 30S subunit by binding and bridging several RNA helices of the 16S rRNA. Forms an intersubunit bridge (bridge B4) with the 23S rRNA of the 50S subunit in the ribosome. This chain is Small ribosomal subunit protein uS15, found in Pseudomonas fluorescens (strain ATCC BAA-477 / NRRL B-23932 / Pf-5).